The primary structure comprises 78 residues: DNA gyrase inhibitor YacG (78 aa).

Zn(2+) is bound by residues C7, C10, C26, and C30.

It belongs to the DNA gyrase inhibitor YacG family. Interacts with GyrB. The cofactor is Zn(2+).

Its function is as follows. Inhibits all the catalytic activities of DNA gyrase by preventing its interaction with DNA. Acts by binding directly to the C-terminal domain of GyrB, which probably disrupts DNA binding by the gyrase. The sequence is that of DNA gyrase inhibitor YacG from Shewanella piezotolerans (strain WP3 / JCM 13877).